A 224-amino-acid chain; its full sequence is Ribose-5-phosphate isomerase A (224 aa).

Substrate-binding positions include 26-29 (TGST), 81-84 (DGAD), and 94-97 (KGGG). Glu103 (proton acceptor) is an active-site residue. Lys121 serves as a coordination point for substrate.

Belongs to the ribose 5-phosphate isomerase family. In terms of assembly, homodimer.

The enzyme catalyses aldehydo-D-ribose 5-phosphate = D-ribulose 5-phosphate. It functions in the pathway carbohydrate degradation; pentose phosphate pathway; D-ribose 5-phosphate from D-ribulose 5-phosphate (non-oxidative stage): step 1/1. Functionally, catalyzes the reversible conversion of ribose-5-phosphate to ribulose 5-phosphate. The protein is Ribose-5-phosphate isomerase A of Listeria innocua serovar 6a (strain ATCC BAA-680 / CLIP 11262).